The following is a 636-amino-acid chain: Bifunctional phosphonoacetaldehyde hydrolase/aminoethylphosphonate transaminase (636 aa).

Positions 1 to 276 (MKKIYGEKIK…IKSDFVPEND (276 aa)) are phosphonoacetaldehyde hydrolase. Asp15 (nucleophile) is an active-site residue. Mg(2+) contacts are provided by Asp15 and Ala17. The active-site Schiff-base intermediate with substrate is the Lys56. Residue Asp189 participates in Mg(2+) binding. The 2-aminoethylphosphonate--pyruvate transaminase stretch occupies residues 277-636 (YILLTPGPLS…ADVIEKFINR (360 aa)). Lys465 carries the N6-(pyridoxal phosphate)lysine modification.

The protein in the N-terminal section; belongs to the HAD-like hydrolase superfamily. PhnX family. In the C-terminal section; belongs to the class-V pyridoxal-phosphate-dependent aminotransferase family. PhnW subfamily. As to quaternary structure, homodimer. Mg(2+) is required as a cofactor. The cofactor is pyridoxal 5'-phosphate.

It carries out the reaction (2-aminoethyl)phosphonate + pyruvate = phosphonoacetaldehyde + L-alanine. It catalyses the reaction phosphonoacetaldehyde + H2O = acetaldehyde + phosphate + H(+). Functionally, involved in phosphonate degradation. The sequence is that of Bifunctional phosphonoacetaldehyde hydrolase/aminoethylphosphonate transaminase (phnXW) from Clostridioides difficile (strain 630) (Peptoclostridium difficile).